The chain runs to 247 residues: Cell division protein ZapD (247 aa).

The protein belongs to the ZapD family. As to quaternary structure, interacts with FtsZ.

It localises to the cytoplasm. Its function is as follows. Cell division factor that enhances FtsZ-ring assembly. Directly interacts with FtsZ and promotes bundling of FtsZ protofilaments, with a reduction in FtsZ GTPase activity. This chain is Cell division protein ZapD, found in Klebsiella pneumoniae (strain 342).